The chain runs to 257 residues: Snake venom serine protease KN8 (257 aa).

The N-terminal stretch at 1–18 (MVLIRVLANLLILQLSYA) is a signal peptide. The propeptide occupies 19-24 (QKSSEL). The 224-residue stretch at 25 to 248 (VVGGLPCNIN…HLDWIKSIIA (224 aa)) folds into the Peptidase S1 domain. 5 disulfide bridges follow: C31/C162, C49/C65, C141/C209, C173/C188, and C199/C224. H64 serves as the catalytic Charge relay system. Residue N102 is glycosylated (N-linked (GlcNAc...) asparagine). The Charge relay system role is filled by D109. 2 N-linked (GlcNAc...) asparagine glycosylation sites follow: N120 and N121. The Charge relay system role is filled by S203.

Belongs to the peptidase S1 family. Snake venom subfamily. In terms of assembly, monomer. Expressed by the venom gland.

It is found in the secreted. Snake venom serine protease that may act in the hemostasis system of the prey. This is Snake venom serine protease KN8 from Trimeresurus stejnegeri (Chinese green tree viper).